The chain runs to 334 residues: Biotin synthase (334 aa).

The Radical SAM core domain maps to 48-275 (NQVQTSQLLS…RSMVRLSAGR (228 aa)). [4Fe-4S] cluster-binding residues include cysteine 63, cysteine 67, and cysteine 70. [2Fe-2S] cluster-binding residues include cysteine 107, cysteine 138, cysteine 198, and arginine 270.

It belongs to the radical SAM superfamily. Biotin synthase family. In terms of assembly, homodimer. Requires [4Fe-4S] cluster as cofactor. The cofactor is [2Fe-2S] cluster.

The catalysed reaction is (4R,5S)-dethiobiotin + (sulfur carrier)-SH + 2 reduced [2Fe-2S]-[ferredoxin] + 2 S-adenosyl-L-methionine = (sulfur carrier)-H + biotin + 2 5'-deoxyadenosine + 2 L-methionine + 2 oxidized [2Fe-2S]-[ferredoxin]. It functions in the pathway cofactor biosynthesis; biotin biosynthesis; biotin from 7,8-diaminononanoate: step 2/2. Its function is as follows. Catalyzes the conversion of dethiobiotin (DTB) to biotin by the insertion of a sulfur atom into dethiobiotin via a radical-based mechanism. The protein is Biotin synthase of Maricaulis maris (strain MCS10) (Caulobacter maris).